The following is a 506-amino-acid chain: Arylsulfatase A (506 aa).

The signal sequence occupies residues 1 to 17; sequence MALGTLFLALAAGLSTA. Ca(2+)-binding residues include Asp28, Asp29, and Cys68. Cys68 serves as the catalytic Nucleophile. Cys68 bears the 3-oxoalanine (Cys) mark. Residue Lys122 participates in substrate binding. The active site involves His124. Ser149 lines the substrate pocket. 2 cysteine pairs are disulfide-bonded: Cys155–Cys171 and Cys160–Cys167. Asn157 carries N-linked (GlcNAc...) asparagine glycosylation. N-linked (GlcNAc...) asparagine glycosylation occurs at Asn183. A substrate-binding site is contributed by His228. Positions 280 and 281 each coordinate Ca(2+). 4 disulfide bridges follow: Cys299/Cys413, Cys487/Cys499, Cys488/Cys501, and Cys492/Cys498. Lys301 is a substrate binding site. The N-linked (GlcNAc...) asparagine glycan is linked to Asn349.

This sequence belongs to the sulfatase family. Homodimer at neutral pH and homooctamer at acidic pH. Exists both as a single chain of 58 kDa (component A) or as a chain of 50 kDa (component B) linked by disulfide bond(s) to a 7 kDa chain (component C). Interacts with SUMF1. Ca(2+) is required as a cofactor. Post-translationally, the conversion to 3-oxoalanine (also known as C-formylglycine, FGly), of a serine or cysteine residue in prokaryotes and of a cysteine residue in eukaryotes, is critical for catalytic activity. This post-translational modification is severely defective in multiple sulfatase deficiency (MSD).

It is found in the endoplasmic reticulum. The protein localises to the lysosome. It catalyses the reaction an N-acyl-1-beta-D-(3-O-sulfo)-galactosyl-sphing-4-enine + H2O = a beta-D-galactosyl-(1&lt;-&gt;1')-N-acylsphing-4-enine + sulfate + H(+). In terms of biological role, hydrolyzes cerebroside sulfate. This is Arylsulfatase A (Arsa) from Mus musculus (Mouse).